We begin with the raw amino-acid sequence, 1190 residues long: JNK-interacting protein (1190 aa).

Positions methionine 1–arginine 35 are disordered. Residues valine 24–leucine 112 form the RH1 domain. The stretch at leucine 78–arginine 165 forms a coiled coil. A disordered region spans residues aspartate 263–glycine 364. The span at proline 277–glutamate 292 shows a compositional bias: polar residues. Positions lysine 383–glutamine 491 form a coiled coil. The 87-residue stretch at arginine 456 to threonine 542 folds into the RH2 domain. The tract at residues glutamate 775–proline 829 is disordered.

This sequence belongs to the JIP scaffold family. Expressed in neurons of the ventral cord, retrovesicular and preanal ganglia and nerve ring, intestinal cells, seam and hypodermal cells, body wall, head muscle and pharynx.

It is found in the cytoplasm. It localises to the perinuclear region. Its function is as follows. The JNK-interacting protein (JIP) group of scaffold proteins selectively mediates JNK signaling by aggregating specific components of the MAPK cascade to form a functional JNK signaling module. May function as a regulator of synaptic vesicle transport, through interactions with the JNK-signaling components and motor proteins. Binds specific components of the JNK signaling pathway namely jnk-1, jkk-1 and sek-1. Associates with components of the motor protein, kinesin-1. Pre-assembled unc-16 scaffolding complexes are then transported as a cargo of kinesin, to the required subcellular location. Regulates the retrograde transport of autophagosomes from the neurites to the cell body of AIY interneurons. The polypeptide is JNK-interacting protein (Caenorhabditis elegans).